The primary structure comprises 256 residues: Sugar fermentation stimulation protein homolog (256 aa).

This sequence belongs to the SfsA family.

In Prochlorococcus marinus (strain MIT 9211), this protein is Sugar fermentation stimulation protein homolog.